The sequence spans 621 residues: Leucine aminopeptidase (621 aa).

A propeptide spanning residues 1–73 (MPLLRSSQHI…ISNRKEFRKM (73 aa)) is cleaved from the precursor. Residues 129–152 (SSSGGSGGNGGSAGSSGNGEGGAQ) form a disordered region. Gly residues predominate over residues 132 to 150 (GGSGGNGGSAGSSGNGEGG). Positions 390, 395, and 402 each coordinate a peptide. Residues K390 and D395 each contribute to the Zn(2+) site. Positions 400-417 (NLKAAPGSMIDLMKFDMS) are L13 loop. Residue K402 is part of the active site. Zn(2+) is bound by residues D410, M412, D415, D475, and E477. Residues D415 and D475 each contribute to the a peptide site. R479 is an active-site residue.

It belongs to the peptidase M17 family. Homohexamer composed of dimer of trimers. Both the identity and concentration of metal ions available dictate the extent to which oligomerization occurs; Mn(2+) and Co(2+) induces oligomerization, whereas Mg(2+) has no effect, and Zn(2+) causes irreversible protein aggregation in vitro. Requires Zn(2+) as cofactor.

It localises to the cytoplasm. The enzyme catalyses Release of an N-terminal amino acid, Xaa-|-Yaa-, in which Xaa is preferably Leu, but may be other amino acids including Pro although not Arg or Lys, and Yaa may be Pro. Amino acid amides and methyl esters are also readily hydrolyzed, but rates on arylamides are exceedingly low.. It catalyses the reaction L-cysteinylglycine + H2O = L-cysteine + glycine. Its activity is regulated as follows. Oligomerization is required for catalytic activity and is metal-dependent. The type of metal that binds the 2 metal binding sites influences catalytic activity and substrate specificity. In vitro, activated by Co(2+), Mn(2+), Ni(2+), Mg(2+) and Zn(2+) with decreasing strength. Occupancy of the site 2 is essential and sufficient for activating the enzyme but occupation of the 2 sites is necessary for full catalytic activity. Inhibited by Ca(2+). Inhibited by fungal metabolite bestatin. Its function is as follows. Aminopeptidase which preferentially cleaves leucine residues from the N-terminus of peptides. Also, has some activity towards tryptophan and methionine and has very low activity towards alanine, arginine, asparagine, phenylalanine and tyrosine. No activity towards histidine, serine, valine, isoleucine, glycine, aspartic acid and glutamic acid. In addition, cleaves the Cys-Gly dipeptide, probably as part of the glutathione regulation pathway; cleavage only occurs in the presence of Mn(2+). Plays a role in the final step of host hemoglobin catabolism, by cleaving hemoglobin-derived oligopeptides providing a source of amino acids for the parasite protein synthesis and for the maintenance of osmotic homeostasis. This is Leucine aminopeptidase from Plasmodium vivax (strain Salvador I).